The following is a 156-amino-acid chain: Snaclec stejaggregin-B subunit alpha (156 aa).

The signal sequence occupies residues 1 to 23 (MGRFISVSFGLLVVFLSLSGTGA). Disulfide bonds link Cys25–Cys36, Cys53–Cys150, and Cys125–Cys142. The 120-residue stretch at 32 to 151 (FKQYCYQIIK…CEQKHLFMCK (120 aa)) folds into the C-type lectin domain.

Belongs to the snaclec family. In terms of assembly, heteromultimer; disulfide-linked. Expressed by the venom gland.

The protein localises to the secreted. In terms of biological role, interferes with one step of hemostasis (modulation of platelet aggregation, or coagulation cascade, for example). The protein is Snaclec stejaggregin-B subunit alpha of Trimeresurus stejnegeri (Chinese green tree viper).